Reading from the N-terminus, the 439-residue chain is Ribosomal protein uS12 methylthiotransferase RimO (439 aa).

The MTTase N-terminal domain maps to 7 to 119 (KQLCLISLGC…IDIMIAKKQN (113 aa)). Residues Cys-16, Cys-50, Cys-82, Cys-151, Cys-155, and Cys-158 each contribute to the [4Fe-4S] cluster site. The Radical SAM core domain maps to 137 to 368 (TGSSVHAYVK…ALKHQNHSFK (232 aa)).

It belongs to the methylthiotransferase family. RimO subfamily. [4Fe-4S] cluster is required as a cofactor.

Its subcellular location is the cytoplasm. It carries out the reaction L-aspartate(89)-[ribosomal protein uS12]-hydrogen + (sulfur carrier)-SH + AH2 + 2 S-adenosyl-L-methionine = 3-methylsulfanyl-L-aspartate(89)-[ribosomal protein uS12]-hydrogen + (sulfur carrier)-H + 5'-deoxyadenosine + L-methionine + A + S-adenosyl-L-homocysteine + 2 H(+). Functionally, catalyzes the methylthiolation of an aspartic acid residue of ribosomal protein uS12. This is Ribosomal protein uS12 methylthiotransferase RimO from Helicobacter pylori (strain G27).